A 143-amino-acid polypeptide reads, in one-letter code: Transcriptional regulator MraZ (143 aa).

2 consecutive SpoVT-AbrB domains span residues 5–47 (EYRH…PQVE) and 76–119 (ATEC…SKEL).

This sequence belongs to the MraZ family. As to quaternary structure, forms oligomers.

It localises to the cytoplasm. The protein localises to the nucleoid. The chain is Transcriptional regulator MraZ from Halalkalibacterium halodurans (strain ATCC BAA-125 / DSM 18197 / FERM 7344 / JCM 9153 / C-125) (Bacillus halodurans).